Consider the following 309-residue polypeptide: Probable lipid kinase YegS-like (309 aa).

The 134-residue stretch at 1–134 (MTTPRWRLIL…IDLLRVDADG (134 aa)) folds into the DAGKc domain. ATP-binding positions include Thr39, 65–71 (GDGTLSA), and Thr96. Mg(2+) is bound by residues Leu219, Asp222, and Leu224. The active-site Proton acceptor is Glu280.

The protein belongs to the diacylglycerol/lipid kinase family. YegS lipid kinase subfamily. It depends on Mg(2+) as a cofactor. Requires Ca(2+) as cofactor.

The protein localises to the cytoplasm. Probably phosphorylates lipids; the in vivo substrate is unknown. The polypeptide is Probable lipid kinase YegS-like (Stenotrophomonas maltophilia (strain K279a)).